Here is a 512-residue protein sequence, read N- to C-terminus: ATP synthase subunit alpha (512 aa).

169 to 176 contributes to the ATP binding site; that stretch reads GDRQTGKT.

This sequence belongs to the ATPase alpha/beta chains family. In terms of assembly, F-type ATPases have 2 components, CF(1) - the catalytic core - and CF(0) - the membrane proton channel. CF(1) has five subunits: alpha(3), beta(3), gamma(1), delta(1), epsilon(1). CF(0) has four main subunits: a(1), b(1), b'(1) and c(9-12).

It localises to the cell inner membrane. The catalysed reaction is ATP + H2O + 4 H(+)(in) = ADP + phosphate + 5 H(+)(out). Produces ATP from ADP in the presence of a proton gradient across the membrane. The alpha chain is a regulatory subunit. In Cereibacter sphaeroides (strain ATCC 17025 / ATH 2.4.3) (Rhodobacter sphaeroides), this protein is ATP synthase subunit alpha.